Consider the following 635-residue polypeptide: Very-long-chain aldehyde decarbonylase GL1-6 (635 aa).

4 consecutive transmembrane segments (helical) span residues 46–66, 100–120, 127–147, and 183–203; these read LLNFMVFPMLLLRLLYGQLWI, IILTALVFYLVSATMPQAQVA, GMVVTAVLHAGPVEFLYYWLH, and VVYFVLLAIPILSTVATGTVS. A Fatty acid hydroxylase domain is found at 139 to 273; sequence VEFLYYWLHR…MPVYDYIYGT (135 aa).

This sequence belongs to the sterol desaturase family. As to quaternary structure, homodimer.

Its subcellular location is the endoplasmic reticulum membrane. The catalysed reaction is a long-chain fatty aldehyde + 2 NADPH + O2 + H(+) = a long-chain alkane + formate + 2 NADP(+) + H2O. Aldehyde decarbonylase involved in the conversion of aldehydes to alkanes. Core component of a very-long-chain alkane synthesis complex. This chain is Very-long-chain aldehyde decarbonylase GL1-6, found in Oryza sativa subsp. indica (Rice).